Here is a 352-residue protein sequence, read N- to C-terminus: MVFRIASSPYTHNQRQTSRIMLLVLLAAVPGIAAQLWFFGWGTLVQILLASVSTLLAEALVLKLRKQSVAATLKDNSALLTGLLLAVSIPPLAPWWMVVLGTVFAVIIAKQLYGGLGQNPFNPAMIGYVVLLISFPVQMTSWLPPHEIAVNIPGFIDAIQVIFSGHTASGADMNTLHLGIDGISQATPLDTFKTSVRAGHSVEQIMQYPIYSGILAGAGWQWVNLAWLAGGLWLLWQKAIRWHIPLSFLVTLALCATLGWLFSPETLAAPQIHLLSGATMLGAFFILTDPVTASTTNRGRLIFGALAGLLVWLIRSFGGYPDGVAFAVLLANITVPLIDYYTRPRVYGHRKG.

The next 4 helical transmembrane spans lie at 20-40 (IMLL…WFFG), 42-62 (GTLV…ALVL), 89-109 (IPPL…VIIA), and 123-143 (PAMI…TSWL). Thr187 carries the FMN phosphoryl threonine modification. The next 5 helical transmembrane spans lie at 214–234 (ILAG…GLWL), 242–262 (WHIP…GWLF), 267–287 (LAAP…FFIL), 301–321 (LIFG…GGYP), and 322–342 (DGVA…DYYT).

Belongs to the NqrB/RnfD family. In terms of assembly, the complex is composed of six subunits: RsxA, RsxB, RsxC, RsxD, RsxE and RsxG. FMN is required as a cofactor.

The protein localises to the cell inner membrane. Its function is as follows. Part of a membrane-bound complex that couples electron transfer with translocation of ions across the membrane. Required to maintain the reduced state of SoxR. The chain is Ion-translocating oxidoreductase complex subunit D from Shigella boydii serotype 18 (strain CDC 3083-94 / BS512).